The primary structure comprises 449 residues: Heterogeneous nuclear ribonucleoprotein H (449 aa).

An N-acetylmethionine modification is found at Met-1. Met-2 carries the N-acetylmethionine; in Heterogeneous nuclear ribonucleoprotein H, N-terminally processed modification. The RRM 1 domain maps to 11–90 (FVVKVRGLPW…RYVEVFKSNN (80 aa)). At Ser-23 the chain carries Phosphoserine. A Glycyl lysine isopeptide (Lys-Gly) (interchain with G-Cter in SUMO2) cross-link involves residue Lys-35. A phosphoserine mark is found at Ser-54 and Ser-63. Glycyl lysine isopeptide (Lys-Gly) (interchain with G-Cter in SUMO2) cross-links involve residues Lys-87 and Lys-98. Residues 111-188 (GFVRLRGLPF…RYIEIFKSSR (78 aa)) enclose the RRM 2 domain. Arg-233 bears the Dimethylated arginine; alternate mark. Arg-233 carries the omega-N-methylarginine; alternate modification. A 1-1 repeat occupies 234-249 (GAYGGGYGGYDDYNGY). The 2 X 16 AA Gly-rich approximate repeats stretch occupies residues 234–433 (GAYGGGYGGY…YGGQSSMSGY (200 aa)). A Phosphotyrosine modification is found at Tyr-246. Residues 289–364 (HCVHMRGLPY…RYVELFLNST (76 aa)) enclose the RRM 3 domain. Residue Ser-310 is modified to Phosphoserine. 3 tandem repeats follow at residues 354–372 (HRYV…GGAY), 374–392 (HRYV…GGAY), and 418–433 (GGYG…MSGY). Positions 354–392 (HRYVELFLNSTAGASGGAYEHRYVELFLNSTAGASGGAY) are 2 X 19 AA perfect repeats.

As to quaternary structure, part of a ternary complex containing FUBP2, PTBP1, PTBP2 and HNRNPH1. Identified in the spliceosome C complex. Interacts with IGF2BP1. Interacts with CUGBP1; the interaction is RNA-dependent. Interacts with MBNL1; the interaction in RNA-independent.

The protein resides in the nucleus. The protein localises to the nucleoplasm. In terms of biological role, this protein is a component of the heterogeneous nuclear ribonucleoprotein (hnRNP) complexes which provide the substrate for the processing events that pre-mRNAs undergo before becoming functional, translatable mRNAs in the cytoplasm. Mediates pre-mRNA alternative splicing regulation. Inhibits, together with CUGBP1, insulin receptor (IR) pre-mRNA exon 11 inclusion in myoblast. Binds to the IR RNA. Binds poly(RG). In Rattus norvegicus (Rat), this protein is Heterogeneous nuclear ribonucleoprotein H (Hnrnph1).